Consider the following 138-residue polypeptide: Extracellular glycoprotein lacritin (138 aa).

The signal sequence occupies residues 1 to 19; it reads MKFTTLLFLAAVAGALVYA. Positions 20 to 79 are disordered; the sequence is EDASSDSTGADPAQEAGTSKPNEEISGPAEPASPPETTTTAQETSAAAVQGTAKVTSSRQ. Low complexity predominate over residues 43–67; sequence EISGPAEPASPPETTTTAQETSAAA. A glycan (N-linked (GlcNAc...) asparagine) is linked at N119.

As to expression, expressed in secretory granules of many acinar cells in lacrimal gland and in scattered acinar cells of salivary glands.

It is found in the secreted. In terms of biological role, modulates secretion by lacrimal acinar cells. The protein is Extracellular glycoprotein lacritin (LACRT) of Homo sapiens (Human).